Reading from the N-terminus, the 128-residue chain is Fluoride-specific ion channel FluC (128 aa).

4 helical membrane passes run 5 to 25 (ALVALGSAIGGTLRYWLSMVI), 32 to 52 (TFPWATLVINVAGSAAIGLFA), 70 to 90 (FFMVGICGGFTTFSSFSLQTL), and 106 to 126 (VGSVALCLLAVWLGHVAATII). The Na(+) site is built by G77 and T80.

It belongs to the fluoride channel Fluc/FEX (TC 1.A.43) family.

It is found in the cell inner membrane. The enzyme catalyses fluoride(in) = fluoride(out). Na(+) is not transported, but it plays an essential structural role and its presence is essential for fluoride channel function. Its function is as follows. Fluoride-specific ion channel. Important for reducing fluoride concentration in the cell, thus reducing its toxicity. In Paramagnetospirillum magneticum (strain ATCC 700264 / AMB-1) (Magnetospirillum magneticum), this protein is Fluoride-specific ion channel FluC.